The following is a 124-amino-acid chain: Succinate dehydrogenase cytochrome b556 subunit (124 aa).

At 1–29 (MTKTKQEIYNKRPTSPHLTIYKPQISSTL) the chain is on the cytoplasmic side. A helical transmembrane segment spans residues 30–55 (SILYRMTGVALFFAVSILVWWLILSK). Residues 56–67 (YDNNYLQLAECC) are Periplasmic-facing. The helical transmembrane segment at 68-88 (IIKICLVAVSYAWFYHLCNGI) threads the bilayer. A heme-binding site is contributed by His83. Residues 89–103 (RHLFWDIGYGFSIKL) are Cytoplasmic-facing. A helical membrane pass occupies residues 104–124 (VNITGWCVVVGSVLLTVLLWV).

This sequence belongs to the cytochrome b560 family. As to quaternary structure, part of an enzyme complex containing four subunits: a flavoprotein, an iron-sulfur protein, plus two membrane-anchoring proteins, SdhC and SdhD. The complex can form homotrimers. The cofactor is heme.

Its subcellular location is the cell inner membrane. It functions in the pathway carbohydrate metabolism; tricarboxylic acid cycle. In terms of biological role, membrane-anchoring subunit of succinate dehydrogenase (SDH). This Rickettsia conorii (strain ATCC VR-613 / Malish 7) protein is Succinate dehydrogenase cytochrome b556 subunit (sdhC).